A 115-amino-acid chain; its full sequence is UPF0122 protein lp_1634 (115 aa).

Belongs to the UPF0122 family.

Might take part in the signal recognition particle (SRP) pathway. This is inferred from the conservation of its genetic proximity to ftsY/ffh. May be a regulatory protein. In Lactiplantibacillus plantarum (strain ATCC BAA-793 / NCIMB 8826 / WCFS1) (Lactobacillus plantarum), this protein is UPF0122 protein lp_1634.